We begin with the raw amino-acid sequence, 388 residues long: MKLSKRIENLPPYLFVQISKKIAEKRAKGEDVISFAIGDPDLPTPKHILAELCKAAEDPSNHRYPETEGLPVLRKAMAEWYQKRFGVKLNPDTEVLPLIGSKEGIGHAAWCFLDPGDIALVPNPAYPVYAISSQLAGAEVFNLPLNKGNNFLPNLEAIPQNILSKAKVLWINYPNNPTGAVAGLSFFQEVANFAAKHNLAVCHDGPYSEIAFDGYKPVSFLEADGAKDVGIEFHSLSKSYNMTGWRIGMAVGNAKMIDALRRFKSNLDSGIPQAIQLMAIAALNGSQEIINQNCAIYQRRRDRLVEALRNIGMEVTAPKASLYIWAPVPESYTSASFATELLDKTGVVVTPGTGYGTAGEGYIRLSLTVPDEQIEKGIAKLAGYKKSS.

Residues Tyr13, Gly38, Lys102, Tyr126, and Asn176 each contribute to the substrate site. Pyridoxal 5'-phosphate-binding positions include 101-102 (SK), Tyr126, Asn176, Tyr207, and 235-237 (SLS). Lys238 bears the N6-(pyridoxal phosphate)lysine mark. Residue Arg246 coordinates pyridoxal 5'-phosphate. Arg364 is a binding site for substrate.

Belongs to the class-I pyridoxal-phosphate-dependent aminotransferase family. LL-diaminopimelate aminotransferase subfamily. Homodimer. Pyridoxal 5'-phosphate is required as a cofactor.

The catalysed reaction is (2S,6S)-2,6-diaminopimelate + 2-oxoglutarate = (S)-2,3,4,5-tetrahydrodipicolinate + L-glutamate + H2O + H(+). Its pathway is amino-acid biosynthesis; L-lysine biosynthesis via DAP pathway; LL-2,6-diaminopimelate from (S)-tetrahydrodipicolinate (aminotransferase route): step 1/1. Involved in the synthesis of meso-diaminopimelate (m-DAP or DL-DAP), required for both lysine and peptidoglycan biosynthesis. Catalyzes the direct conversion of tetrahydrodipicolinate to LL-diaminopimelate. The chain is LL-diaminopimelate aminotransferase from Dehalococcoides mccartyi (strain ATCC BAA-2100 / JCM 16839 / KCTC 5957 / BAV1).